The primary structure comprises 190 residues: 6,7-dimethyl-8-ribityllumazine synthase (190 aa).

5-amino-6-(D-ribitylamino)uracil is bound by residues F23, 61–63, and 85–87; these read SFE and AVI. 90-91 serves as a coordination point for (2S)-2-hydroxy-3-oxobutyl phosphate; it reads QT. H93 functions as the Proton donor in the catalytic mechanism. A 5-amino-6-(D-ribitylamino)uracil-binding site is contributed by F118. R132 is a binding site for (2S)-2-hydroxy-3-oxobutyl phosphate.

This sequence belongs to the DMRL synthase family.

It carries out the reaction (2S)-2-hydroxy-3-oxobutyl phosphate + 5-amino-6-(D-ribitylamino)uracil = 6,7-dimethyl-8-(1-D-ribityl)lumazine + phosphate + 2 H2O + H(+). The protein operates within cofactor biosynthesis; riboflavin biosynthesis; riboflavin from 2-hydroxy-3-oxobutyl phosphate and 5-amino-6-(D-ribitylamino)uracil: step 1/2. In terms of biological role, catalyzes the formation of 6,7-dimethyl-8-ribityllumazine by condensation of 5-amino-6-(D-ribitylamino)uracil with 3,4-dihydroxy-2-butanone 4-phosphate. This is the penultimate step in the biosynthesis of riboflavin. This is 6,7-dimethyl-8-ribityllumazine synthase from Nostoc sp. (strain PCC 7120 / SAG 25.82 / UTEX 2576).